The primary structure comprises 280 residues: 4-diphosphocytidyl-2-C-methyl-D-erythritol kinase (280 aa).

The active site involves Lys-8. An ATP-binding site is contributed by 91 to 101; it reads PVAAGLAGGSA. Residue Asp-133 is part of the active site.

Belongs to the GHMP kinase family. IspE subfamily.

The catalysed reaction is 4-CDP-2-C-methyl-D-erythritol + ATP = 4-CDP-2-C-methyl-D-erythritol 2-phosphate + ADP + H(+). It functions in the pathway isoprenoid biosynthesis; isopentenyl diphosphate biosynthesis via DXP pathway; isopentenyl diphosphate from 1-deoxy-D-xylulose 5-phosphate: step 3/6. Its function is as follows. Catalyzes the phosphorylation of the position 2 hydroxy group of 4-diphosphocytidyl-2C-methyl-D-erythritol. This Clostridium acetobutylicum (strain ATCC 824 / DSM 792 / JCM 1419 / IAM 19013 / LMG 5710 / NBRC 13948 / NRRL B-527 / VKM B-1787 / 2291 / W) protein is 4-diphosphocytidyl-2-C-methyl-D-erythritol kinase.